Consider the following 223-residue polypeptide: Ribose-5-phosphate isomerase A (223 aa).

Substrate-binding positions include 28-31 (TGTT), 81-84 (DSAD), and 94-97 (KGGG). Catalysis depends on Glu-103, which acts as the Proton acceptor. A substrate-binding site is contributed by Lys-121.

Belongs to the ribose 5-phosphate isomerase family. In terms of assembly, homodimer.

The catalysed reaction is aldehydo-D-ribose 5-phosphate = D-ribulose 5-phosphate. Its pathway is carbohydrate degradation; pentose phosphate pathway; D-ribose 5-phosphate from D-ribulose 5-phosphate (non-oxidative stage): step 1/1. Its function is as follows. Catalyzes the reversible conversion of ribose-5-phosphate to ribulose 5-phosphate. The chain is Ribose-5-phosphate isomerase A from Buchnera aphidicola subsp. Acyrthosiphon pisum (strain 5A).